Reading from the N-terminus, the 176-residue chain is MKIQDYTKQMVDEKSFIDMAYTLLNDKGETMNLYDIIDEFRALGDYEYEEIETRVVQFYTDLNTDGRFLNVGENLWGLRDWYSVDDIEEKIAPTIQKFDVLDADDEEDQNLKLLGEDEMDDDDDIPAQTDDQEELNDPEDEQVEEEINHSDIVIEEDEDELDEDEEDFEDEEDFKA.

Positions 14–81 (KSFIDMAYTL…GENLWGLRDW (68 aa)) constitute an HTH HARE-type domain. Positions 114-176 (LGEDEMDDDD…DFEDEEDFKA (63 aa)) are disordered. 2 stretches are compositionally biased toward acidic residues: residues 116 to 145 (EDEMDDDDDIPAQTDDQEELNDPEDEQVEE) and 153 to 176 (VIEEDEDELDEDEEDFEDEEDFKA).

It belongs to the RpoE family. As to quaternary structure, RNAP is composed of a core of 2 alpha, a beta and a beta' subunits. The core is associated with a delta subunit and one of several sigma factors.

Participates in both the initiation and recycling phases of transcription. In the presence of the delta subunit, RNAP displays an increased specificity of transcription, a decreased affinity for nucleic acids, and an increased efficiency of RNA synthesis because of enhanced recycling. This Staphylococcus aureus (strain bovine RF122 / ET3-1) protein is Probable DNA-directed RNA polymerase subunit delta.